A 536-amino-acid polypeptide reads, in one-letter code: Apolipoprotein N-acyltransferase (536 aa).

6 helical membrane-spanning segments follow: residues 34–54 (PLWW…RPGA), 64–84 (ALIG…WLFI), 89–109 (YGAL…AFLA), 129–149 (GAAL…GSLW), 172–192 (YVGV…CVQW), and 199–219 (HWPM…AAVQ). Residues 244-487 (LQGNIAQDEK…RGVLRGQVHG (244 aa)) enclose the CN hydrolase domain. E283 functions as the Proton acceptor in the catalytic mechanism. K345 is an active-site residue. C395 functions as the Nucleophile in the catalytic mechanism. Residues 503-523 (WWVARWGLWPLWALAALALAW) traverse the membrane as a helical segment.

It belongs to the CN hydrolase family. Apolipoprotein N-acyltransferase subfamily.

Its subcellular location is the cell inner membrane. It carries out the reaction N-terminal S-1,2-diacyl-sn-glyceryl-L-cysteinyl-[lipoprotein] + a glycerophospholipid = N-acyl-S-1,2-diacyl-sn-glyceryl-L-cysteinyl-[lipoprotein] + a 2-acyl-sn-glycero-3-phospholipid + H(+). The protein operates within protein modification; lipoprotein biosynthesis (N-acyl transfer). In terms of biological role, catalyzes the phospholipid dependent N-acylation of the N-terminal cysteine of apolipoprotein, the last step in lipoprotein maturation. In Verminephrobacter eiseniae (strain EF01-2), this protein is Apolipoprotein N-acyltransferase.